A 73-amino-acid chain; its full sequence is TGVESARDAYIAKPHNCVYECFDAFSSYCNDLCTENGAKSGYCQIAGKYGNGCWCIELPDNVPIRIPGKCHRR.

The first 5 residues, 1-5, serve as a signal peptide directing secretion; the sequence is TGVES. An LCN-type CS-alpha/beta domain is found at 7–71; the sequence is RDAYIAKPHN…VPIRIPGKCH (65 aa). 4 disulfide bridges follow: cysteine 17–cysteine 70, cysteine 21–cysteine 43, cysteine 29–cysteine 53, and cysteine 33–cysteine 55. The propeptide at 72–73 is removed by a carboxypeptidase; that stretch reads RR.

The protein belongs to the long (4 C-C) scorpion toxin superfamily. Sodium channel inhibitor family. Alpha subfamily. As to expression, expressed by the venom gland.

The protein resides in the secreted. Its function is as follows. Alpha toxins bind voltage-independently at site-3 of sodium channels (Nav) and inhibit the inactivation of the activated channels, thereby blocking neuronal transmission. This is Sodium channel neurotoxin MeuNaTxalpha-13 from Mesobuthus eupeus (Lesser Asian scorpion).